The following is a 747-amino-acid chain: Protein tyrosine phosphatase domain-containing protein 1 (747 aa).

Residues 1 to 36 (MAAGVLPQNEDPYSTLVNSSGHAAHMDENSGRPAPK) form a disordered region. Residues 11–21 (DPYSTLVNSSG) show a composition bias toward polar residues. The region spanning 82–253 (YSSWVTDNIL…LAPLRNIFSC (172 aa)) is the Tyrosine-protein phosphatase domain. The active-site Phosphocysteine intermediate is the C190. Residues S392, S394, and S543 each carry the phosphoserine modification. Positions 549 to 570 (SSPKAQFPHGQETQDSTDLSEA) are disordered.

The protein belongs to the protein-tyrosine phosphatase family. Non-receptor class PTPDC1 subfamily.

May play roles in cilia formation and/or maintenance. In Mus musculus (Mouse), this protein is Protein tyrosine phosphatase domain-containing protein 1 (Ptpdc1).